The following is a 119-amino-acid chain: MIGIDIVSIARIEKCVKRFKMKFLERFLSPSEIVLCKDKSSSIAGFFALKEACSKALQVGIGKELSFLDIKISKSPKNAPLITLSKEKMDYFNIQSLSASISHDAGFAIAVVVVSSSNE.

Mg(2+) contacts are provided by D5 and E51.

The protein belongs to the P-Pant transferase superfamily. AcpS family. It depends on Mg(2+) as a cofactor.

It is found in the cytoplasm. It catalyses the reaction apo-[ACP] + CoA = holo-[ACP] + adenosine 3',5'-bisphosphate + H(+). Its function is as follows. Transfers the 4'-phosphopantetheine moiety from coenzyme A to a Ser of acyl-carrier-protein. This is Holo-[acyl-carrier-protein] synthase from Helicobacter pylori (strain ATCC 700392 / 26695) (Campylobacter pylori).